The chain runs to 762 residues: Glucan endo-1,3-beta-glucosidase BGN13.1 (762 aa).

The N-terminal stretch at 1-16 (MLKLTALVALLLGAAS) is a signal peptide. Residues 17–33 (ATPTPSPPASDEGITKR) constitute a propeptide that is removed on maturation.

It belongs to the glycosyl hydrolase 55 family. Post-translationally, does not seem to be glycosylated.

Its subcellular location is the secreted. The enzyme catalyses Hydrolysis of (1-&gt;3)-beta-D-glucosidic linkages in (1-&gt;3)-beta-D-glucans.. Its activity is regulated as follows. Inhibited by glucose. Functionally, involved in mycoparasitism, hydrolyzes yeast and fungal cell walls. Classified as a small-oligosaccharide-producing type based its the end products: glucose, laminaribiose or laminaritetraose. The protein is Glucan endo-1,3-beta-glucosidase BGN13.1 (bgn13.1) of Trichoderma harzianum (Hypocrea lixii).